A 269-amino-acid chain; its full sequence is CUE domain-containing protein 2-B (269 aa).

Positions 110–130 are disordered; that stretch reads ASPSEKTATEPLEGAVAQDKD. The region spanning 131–174 is the CUE domain; sequence DPKTGVDLLLEIFPSCTITQAQTALSMAKGDLEDAVQIIVDGKV.

It belongs to the CUEDC2 family. In terms of processing, phosphorylated.

It is found in the cytoplasm. It localises to the nucleus. Functionally, may play a role in targeting proteins for ubiquitination and subsequent proteasomal degradation. The polypeptide is CUE domain-containing protein 2-B (cuedc2-b) (Xenopus laevis (African clawed frog)).